A 416-amino-acid polypeptide reads, in one-letter code: Multifunctional CCA protein (416 aa).

Glycine 8 and arginine 11 together coordinate ATP. 2 residues coordinate CTP: glycine 8 and arginine 11. Residues aspartate 21 and aspartate 23 each contribute to the Mg(2+) site. Residues arginine 91, arginine 137, and arginine 140 each coordinate ATP. CTP contacts are provided by arginine 91, arginine 137, and arginine 140. Residues 228–329 (TGLHTMLVLA…IKLFDKADFW (102 aa)) form the HD domain.

The protein belongs to the tRNA nucleotidyltransferase/poly(A) polymerase family. Bacterial CCA-adding enzyme type 1 subfamily. In terms of assembly, monomer. Can also form homodimers and oligomers. Requires Mg(2+) as cofactor. Ni(2+) is required as a cofactor.

The enzyme catalyses a tRNA precursor + 2 CTP + ATP = a tRNA with a 3' CCA end + 3 diphosphate. It catalyses the reaction a tRNA with a 3' CCA end + 2 CTP + ATP = a tRNA with a 3' CCACCA end + 3 diphosphate. Catalyzes the addition and repair of the essential 3'-terminal CCA sequence in tRNAs without using a nucleic acid template. Adds these three nucleotides in the order of C, C, and A to the tRNA nucleotide-73, using CTP and ATP as substrates and producing inorganic pyrophosphate. tRNA 3'-terminal CCA addition is required both for tRNA processing and repair. Also involved in tRNA surveillance by mediating tandem CCA addition to generate a CCACCA at the 3' terminus of unstable tRNAs. While stable tRNAs receive only 3'-terminal CCA, unstable tRNAs are marked with CCACCA and rapidly degraded. The sequence is that of Multifunctional CCA protein from Shewanella sp. (strain ANA-3).